A 121-amino-acid chain; its full sequence is MSRTKGGTVTHARHKKVTDAAKGYYGRRKNTFKVARQAVDKANQYATRDRKNRKRQFRALWIQRINAAVRAHDEALTYSRFINGLSLAGIEVDRKVLADLAVHEPEAFSAIVDQAKAALPA.

It belongs to the bacterial ribosomal protein bL20 family.

Binds directly to 23S ribosomal RNA and is necessary for the in vitro assembly process of the 50S ribosomal subunit. It is not involved in the protein synthesizing functions of that subunit. The sequence is that of Large ribosomal subunit protein bL20 from Dinoroseobacter shibae (strain DSM 16493 / NCIMB 14021 / DFL 12).